We begin with the raw amino-acid sequence, 266 residues long: Electron transfer flavoprotein subunit beta (266 aa).

Belongs to the ETF beta-subunit/FixA family. In terms of assembly, heterodimer of an alpha and a beta subunit. It depends on FAD as a cofactor. Requires AMP as cofactor.

Its function is as follows. The electron transfer flavoprotein serves as a specific electron acceptor for other dehydrogenases. It transfers the electrons to the main respiratory chain via ETF-ubiquinone oxidoreductase (ETF dehydrogenase). The chain is Electron transfer flavoprotein subunit beta (etfB) from Mycobacterium leprae (strain TN).